A 209-amino-acid chain; its full sequence is Large ribosomal subunit protein uL3 (209 aa).

The tract at residues 124–156 is disordered; the sequence is KRHNFSGGQRTHGQSDRQRAPGSVGGSSDPSRV.

The protein belongs to the universal ribosomal protein uL3 family. In terms of assembly, part of the 50S ribosomal subunit. Forms a cluster with proteins L14 and L19.

Its function is as follows. One of the primary rRNA binding proteins, it binds directly near the 3'-end of the 23S rRNA, where it nucleates assembly of the 50S subunit. The polypeptide is Large ribosomal subunit protein uL3 (Pelodictyon phaeoclathratiforme (strain DSM 5477 / BU-1)).